We begin with the raw amino-acid sequence, 484 residues long: Mitochondrial metal transporter 2 (484 aa).

The N-terminal 56 residues, 1 to 56, are a transit peptide targeting the mitochondrion; it reads MLRISIDSIKQFGSFVPGYNNTSYHAAGRAIRTSSLYSTMISANPRRCLHSSKLLN. Polar residues predominate over residues 73 to 82; it reads SSQNGSNSRQ. The interval 73–114 is disordered; it reads SSQNGSNSRQNESEGKKEGKASSVKSLLQHTHSHSHTHMHDN. Residues 83-92 show a composition bias toward basic and acidic residues; that stretch reads NESEGKKEGK. Transmembrane regions (helical) follow at residues 132-152, 158-178, 209-229, 256-276, and 316-336; these read ITWIGLASNVGMAVGKFVGGI, ALLADSVHALSDLVSDFLTLF, ILAMAGISIGWSSLCAIVGPV, ATNVNAVWIAAGSILVKEWVF, and YFFNIQSLDNLGGLVVSGLII. The segment at 453–484 is disordered; that stretch reads DSKGDLEHSHDTKSTNHTHTHSDSADTHTHKH.

It belongs to the cation diffusion facilitator (CDF) transporter (TC 2.A.4) family. SLC30A subfamily.

Its subcellular location is the mitochondrion membrane. Its function is as follows. Mitochondrial metal transporter involved in mitochondrial iron accumulation. The chain is Mitochondrial metal transporter 2 (MMT2) from Saccharomyces cerevisiae (strain ATCC 204508 / S288c) (Baker's yeast).